Consider the following 444-residue polypeptide: 3-isopropylmalate dehydratase large subunit (444 aa).

[4Fe-4S] cluster is bound by residues Xaa-348, Cys-408, and Xaa-411. The interval Glu-423–His-444 is disordered.

It belongs to the aconitase/IPM isomerase family. LeuC type 1 subfamily. Heterodimer of LeuC and LeuD. [4Fe-4S] cluster is required as a cofactor.

The enzyme catalyses (2R,3S)-3-isopropylmalate = (2S)-2-isopropylmalate. Its pathway is amino-acid biosynthesis; L-leucine biosynthesis; L-leucine from 3-methyl-2-oxobutanoate: step 2/4. Functionally, catalyzes the isomerization between 2-isopropylmalate and 3-isopropylmalate, via the formation of 2-isopropylmaleate. The protein is 3-isopropylmalate dehydratase large subunit of Buchnera aphidicola subsp. Uroleucon rudbeckiae.